Here is a 208-residue protein sequence, read N- to C-terminus: Uracil phosphoribosyltransferase (208 aa).

5-phospho-alpha-D-ribose 1-diphosphate-binding positions include Arg-78, Arg-103, and Asp-130 to Ser-138. Residues Ile-193 and Gly-198–Ala-200 contribute to the uracil site. Asp-199 lines the 5-phospho-alpha-D-ribose 1-diphosphate pocket.

The protein belongs to the UPRTase family. It depends on Mg(2+) as a cofactor.

It carries out the reaction UMP + diphosphate = 5-phospho-alpha-D-ribose 1-diphosphate + uracil. It participates in pyrimidine metabolism; UMP biosynthesis via salvage pathway; UMP from uracil: step 1/1. Allosterically activated by GTP. Its function is as follows. Catalyzes the conversion of uracil and 5-phospho-alpha-D-ribose 1-diphosphate (PRPP) to UMP and diphosphate. The polypeptide is Uracil phosphoribosyltransferase (Vibrio cholerae serotype O1 (strain ATCC 39315 / El Tor Inaba N16961)).